The chain runs to 392 residues: L-rhamnonate dehydratase (392 aa).

Substrate contacts are provided by His22 and Arg48. Asp214, Glu240, and Glu268 together coordinate Mg(2+). Catalysis depends on His318, which acts as the Proton acceptor. Glu338 provides a ligand contact to substrate.

Belongs to the mandelate racemase/muconate lactonizing enzyme family. RhamD subfamily. As to quaternary structure, homooctamer; tetramer of dimers. Mg(2+) is required as a cofactor.

The enzyme catalyses L-rhamnonate = 2-dehydro-3-deoxy-L-rhamnonate + H2O. In terms of biological role, catalyzes the dehydration of L-rhamnonate to 2-keto-3-deoxy-L-rhamnonate (KDR). This Paraburkholderia phymatum (strain DSM 17167 / CIP 108236 / LMG 21445 / STM815) (Burkholderia phymatum) protein is L-rhamnonate dehydratase.